The primary structure comprises 203 residues: E3 ubiquitin-protein ligase rnf152-A (203 aa).

The segment at 12–55 (CQICFNYYSPRRRPKLLDCKRTCCSVCLQQMRACQKDLRCPWCR) adopts an RING-type; degenerate zinc-finger fold. A helical membrane pass occupies residues 167–187 (SGICTVILVACVLVFLLGIVL).

It belongs to the RNF152 family.

The protein localises to the lysosome membrane. It carries out the reaction S-ubiquitinyl-[E2 ubiquitin-conjugating enzyme]-L-cysteine + [acceptor protein]-L-lysine = [E2 ubiquitin-conjugating enzyme]-L-cysteine + N(6)-ubiquitinyl-[acceptor protein]-L-lysine.. Its pathway is protein modification; protein ubiquitination. In terms of biological role, E3 ubiquitin-protein ligase that acts as a negative regulator of mTORC1 signaling by mediating ubiquitination of RagA/RRAGA and RHEB. Catalyzes 'Lys-63'-linked polyubiquitination of RagA/RRAGA in response to amino acid starvation, thereby regulating mTORC1 signaling. Also mediates monoubiquitination of RHEB, promoting its association with the TSC-TBC complex and subsequent inhibition. Also mediates 'Lys-48'-linked polyubiquitination of target proteins and their subsequent targeting to the proteasome for degradation. The chain is E3 ubiquitin-protein ligase rnf152-A from Xenopus laevis (African clawed frog).